The primary structure comprises 81 residues: Putative defensin-like protein 31 (81 aa).

The signal sequence occupies residues 1–26; sequence MTSSSKCLFFVFLCLAALLTPYLAEA. Disulfide bonds link Cys-38–Cys-58, Cys-44–Cys-70, and Cys-48–Cys-72.

Belongs to the DEFL family.

Its subcellular location is the secreted. This Arabidopsis thaliana (Mouse-ear cress) protein is Putative defensin-like protein 31.